The sequence spans 219 residues: Large ribosomal subunit protein uL4 (219 aa).

Residues 43 to 101 (AAARQGTHKTKRRGEVRGGGKKPYRQKGTGRARQGSTRAPQFAGGGVVHGPQPRDYSQR) form a disordered region. Residues 61–72 (GGKKPYRQKGTG) are compositionally biased toward basic residues.

This sequence belongs to the universal ribosomal protein uL4 family. Part of the 50S ribosomal subunit.

One of the primary rRNA binding proteins, this protein initially binds near the 5'-end of the 23S rRNA. It is important during the early stages of 50S assembly. It makes multiple contacts with different domains of the 23S rRNA in the assembled 50S subunit and ribosome. Functionally, forms part of the polypeptide exit tunnel. This Streptomyces coelicolor (strain ATCC BAA-471 / A3(2) / M145) protein is Large ribosomal subunit protein uL4.